The chain runs to 138 residues: MTAIFLMSMVFGLACGQTMSFCIPTEYMMHVERKECAYCLTINTTICAGYCMTRDINGKLFLPKYALSQDVCTYRDFMYKTVEIPGCPDHVTPYFSYPVAVSCKCGKCNTDYSDCIHEAIKANYCTKPQKSYVVEFSI.

Positions 1–20 are cleaved as a signal peptide; it reads MTAIFLMSMVFGLACGQTMS. 6 disulfide bridges follow: Cys-22/Cys-72, Cys-36/Cys-87, Cys-39/Cys-125, Cys-47/Cys-103, Cys-51/Cys-105, and Cys-108/Cys-115. The N-linked (GlcNAc...) asparagine glycan is linked to Asn-43. A propeptide spanning residues 133–138 is cleaved from the precursor; the sequence is VVEFSI.

This sequence belongs to the glycoprotein hormones subunit beta family. Heterodimer of a common alpha chain and a unique beta chain which confers biological specificity to thyrotropin, lutropin, follitropin and gonadotropin.

It localises to the secreted. Indispensable for the control of thyroid structure and metabolism. In Equus caballus (Horse), this protein is Thyrotropin subunit beta (TSHB).